Reading from the N-terminus, the 530-residue chain is Glucose-6-phosphate isomerase (530 aa).

Glutamate 335 acts as the Proton donor in catalysis. Catalysis depends on residues histidine 366 and lysine 495.

Belongs to the GPI family.

Its subcellular location is the cytoplasm. It catalyses the reaction alpha-D-glucose 6-phosphate = beta-D-fructose 6-phosphate. It participates in carbohydrate biosynthesis; gluconeogenesis. The protein operates within carbohydrate degradation; glycolysis; D-glyceraldehyde 3-phosphate and glycerone phosphate from D-glucose: step 2/4. Functionally, catalyzes the reversible isomerization of glucose-6-phosphate to fructose-6-phosphate. In Roseobacter denitrificans (strain ATCC 33942 / OCh 114) (Erythrobacter sp. (strain OCh 114)), this protein is Glucose-6-phosphate isomerase.